Consider the following 264-residue polypeptide: uncharacterized protein (264 aa).

The interval 1 to 20 is disordered; it reads MENIEKKCQPETINEDNNDE.

Belongs to the mimivirus R73/L269/L862 family.

This is an uncharacterized protein from Acanthamoeba polyphaga mimivirus (APMV).